The following is a 227-amino-acid chain: Probable GTP-binding protein EngB (227 aa).

Residues I13–Y188 enclose the EngB-type G domain. GTP contacts are provided by residues G21–S28, G48–M52, D67–G70, T134–D137, and F167–A169. Mg(2+) contacts are provided by S28 and T50.

It belongs to the TRAFAC class TrmE-Era-EngA-EngB-Septin-like GTPase superfamily. EngB GTPase family. The cofactor is Mg(2+).

Necessary for normal cell division and for the maintenance of normal septation. The polypeptide is Probable GTP-binding protein EngB (Psychrobacter cryohalolentis (strain ATCC BAA-1226 / DSM 17306 / VKM B-2378 / K5)).